Reading from the N-terminus, the 109-residue chain is Large ribosomal subunit protein uL22 (109 aa).

This sequence belongs to the universal ribosomal protein uL22 family. Part of the 50S ribosomal subunit.

This protein binds specifically to 23S rRNA; its binding is stimulated by other ribosomal proteins, e.g. L4, L17, and L20. It is important during the early stages of 50S assembly. It makes multiple contacts with different domains of the 23S rRNA in the assembled 50S subunit and ribosome. In terms of biological role, the globular domain of the protein is located near the polypeptide exit tunnel on the outside of the subunit, while an extended beta-hairpin is found that lines the wall of the exit tunnel in the center of the 70S ribosome. This chain is Large ribosomal subunit protein uL22, found in Methylibium petroleiphilum (strain ATCC BAA-1232 / LMG 22953 / PM1).